The sequence spans 252 residues: Ribonuclease 3 (252 aa).

An RNase III domain is found at 3 to 125; that stretch reads LATLETRLDH…IFGAAFLDGG (123 aa). Glu-38 contributes to the Mg(2+) binding site. Asp-42 is an active-site residue. Asp-111 and Glu-114 together coordinate Mg(2+). Glu-114 is a catalytic residue. The 71-residue stretch at 152–222 folds into the DRBM domain; it reads DAKTLLQEFL…AKLALEAAQA (71 aa).

This sequence belongs to the ribonuclease III family. In terms of assembly, homodimer. Mg(2+) serves as cofactor.

It localises to the cytoplasm. The enzyme catalyses Endonucleolytic cleavage to 5'-phosphomonoester.. Digests double-stranded RNA. Involved in the processing of primary rRNA transcript to yield the immediate precursors to the large and small rRNAs (23S and 16S). Processes some mRNAs, and tRNAs when they are encoded in the rRNA operon. Processes pre-crRNA and tracrRNA of type II CRISPR loci if present in the organism. In Bordetella petrii (strain ATCC BAA-461 / DSM 12804 / CCUG 43448), this protein is Ribonuclease 3.